Consider the following 388-residue polypeptide: 4-hydroxy-3-methylbut-2-en-1-yl diphosphate synthase (flavodoxin) (388 aa).

[4Fe-4S] cluster contacts are provided by C281, C284, C316, and E323.

Belongs to the IspG family. The cofactor is [4Fe-4S] cluster.

It carries out the reaction (2E)-4-hydroxy-3-methylbut-2-enyl diphosphate + oxidized [flavodoxin] + H2O + 2 H(+) = 2-C-methyl-D-erythritol 2,4-cyclic diphosphate + reduced [flavodoxin]. The protein operates within isoprenoid biosynthesis; isopentenyl diphosphate biosynthesis via DXP pathway; isopentenyl diphosphate from 1-deoxy-D-xylulose 5-phosphate: step 5/6. Its function is as follows. Converts 2C-methyl-D-erythritol 2,4-cyclodiphosphate (ME-2,4cPP) into 1-hydroxy-2-methyl-2-(E)-butenyl 4-diphosphate. The protein is 4-hydroxy-3-methylbut-2-en-1-yl diphosphate synthase (flavodoxin) of Paenarthrobacter aurescens (strain TC1).